We begin with the raw amino-acid sequence, 1093 residues long: Protein translocase subunit SecA (1093 aa).

Residues Q84, 102–106, and D491 contribute to the ATP site; that span reads GEGKT. Disordered stretches follow at residues 837–869 and 904–1062; these read QNLQ…SEHE and SELE…TSEA. 3 stretches are compositionally biased toward basic and acidic residues: residues 904–937, 944–971, and 978–1062; these read SELE…DATK, EELK…EKLK, and PKDL…TSEA.

It belongs to the SecA family. Monomer and homodimer. Part of the essential Sec protein translocation apparatus which comprises SecA, SecYEG and auxiliary proteins SecDF. Other proteins may also be involved.

The protein resides in the cell membrane. It localises to the cytoplasm. The enzyme catalyses ATP + H2O + cellular proteinSide 1 = ADP + phosphate + cellular proteinSide 2.. In terms of biological role, part of the Sec protein translocase complex. Interacts with the SecYEG preprotein conducting channel. Has a central role in coupling the hydrolysis of ATP to the transfer of proteins into and across the cell membrane, serving as an ATP-driven molecular motor driving the stepwise translocation of polypeptide chains across the membrane. This Mycoplasmopsis synoviae (strain 53) (Mycoplasma synoviae) protein is Protein translocase subunit SecA.